The sequence spans 521 residues: Probable tRNA (uracil-O(2)-)-methyltransferase (521 aa).

Belongs to the TRM44 family.

It is found in the cytoplasm. It carries out the reaction uridine(44) in tRNA(Ser) + S-adenosyl-L-methionine = 2'-O-methyluridine(44) in tRNA(Ser) + S-adenosyl-L-homocysteine + H(+). In terms of biological role, probable adenosyl-L-methionine (AdoMet)-dependent tRNA (uracil-O(2)-)-methyltransferase. In Drosophila melanogaster (Fruit fly), this protein is Probable tRNA (uracil-O(2)-)-methyltransferase (trmt44).